The primary structure comprises 158 residues: 6,7-dimethyl-8-ribityllumazine synthase (158 aa).

Residues Phe22, 57 to 59 (AYE), and 84 to 86 (TVI) contribute to the 5-amino-6-(D-ribitylamino)uracil site. Residue 89 to 90 (GT) participates in (2S)-2-hydroxy-3-oxobutyl phosphate binding. His92 serves as the catalytic Proton donor. Phe117 contacts 5-amino-6-(D-ribitylamino)uracil. Position 131 (Arg131) interacts with (2S)-2-hydroxy-3-oxobutyl phosphate.

The protein belongs to the DMRL synthase family. In terms of assembly, forms an icosahedral capsid composed of 60 subunits, arranged as a dodecamer of pentamers.

It carries out the reaction (2S)-2-hydroxy-3-oxobutyl phosphate + 5-amino-6-(D-ribitylamino)uracil = 6,7-dimethyl-8-(1-D-ribityl)lumazine + phosphate + 2 H2O + H(+). Its pathway is cofactor biosynthesis; riboflavin biosynthesis; riboflavin from 2-hydroxy-3-oxobutyl phosphate and 5-amino-6-(D-ribitylamino)uracil: step 1/2. Its function is as follows. Catalyzes the formation of 6,7-dimethyl-8-ribityllumazine by condensation of 5-amino-6-(D-ribitylamino)uracil with 3,4-dihydroxy-2-butanone 4-phosphate. This is the penultimate step in the biosynthesis of riboflavin. This is 6,7-dimethyl-8-ribityllumazine synthase from Pectobacterium atrosepticum (strain SCRI 1043 / ATCC BAA-672) (Erwinia carotovora subsp. atroseptica).